The primary structure comprises 523 residues: GMP synthase [glutamine-hydrolyzing] (523 aa).

In terms of domain architecture, Glutamine amidotransferase type-1 spans 8–205 (KILILDFGSQ…VVNICGCTTN (198 aa)). The active-site Nucleophile is Cys85. Active-site residues include His179 and Glu181. In terms of domain architecture, GMPS ATP-PPase spans 206 to 398 (WTPENIIEDA…LGLPAEMLNR (193 aa)). Position 233–239 (233–239 (SGGVDSS)) interacts with ATP.

In terms of assembly, homodimer.

It carries out the reaction XMP + L-glutamine + ATP + H2O = GMP + L-glutamate + AMP + diphosphate + 2 H(+). It participates in purine metabolism; GMP biosynthesis; GMP from XMP (L-Gln route): step 1/1. Its function is as follows. Catalyzes the synthesis of GMP from XMP. The chain is GMP synthase [glutamine-hydrolyzing] from Mannheimia succiniciproducens (strain KCTC 0769BP / MBEL55E).